Reading from the N-terminus, the 199-residue chain is dITP/XTP pyrophosphatase (199 aa).

Residue 7 to 12 coordinates substrate; the sequence is SNNRGK. 2 residues coordinate Mg(2+): Asp-39 and Asp-68. Asp-68 functions as the Proton acceptor in the catalytic mechanism. Substrate is bound by residues Ala-69, 154-157, Lys-177, and 182-183; these read FGFD and HR.

Belongs to the HAM1 NTPase family. In terms of assembly, homodimer. Requires Mg(2+) as cofactor.

It carries out the reaction XTP + H2O = XMP + diphosphate + H(+). The enzyme catalyses dITP + H2O = dIMP + diphosphate + H(+). The catalysed reaction is ITP + H2O = IMP + diphosphate + H(+). Pyrophosphatase that catalyzes the hydrolysis of nucleoside triphosphates to their monophosphate derivatives, with a high preference for the non-canonical purine nucleotides XTP (xanthosine triphosphate), dITP (deoxyinosine triphosphate) and ITP. Seems to function as a house-cleaning enzyme that removes non-canonical purine nucleotides from the nucleotide pool, thus preventing their incorporation into DNA/RNA and avoiding chromosomal lesions. The sequence is that of dITP/XTP pyrophosphatase from Paracidovorax citrulli (strain AAC00-1) (Acidovorax citrulli).